A 54-amino-acid chain; its full sequence is Large ribosomal subunit protein eL37 (54 aa).

Residues cysteine 20, cysteine 23, cysteine 35, and cysteine 38 each coordinate Zn(2+). The segment at 20–38 (CRRCGHHTYNVRTKRCSHC) adopts a C4-type zinc-finger fold.

This sequence belongs to the eukaryotic ribosomal protein eL37 family. Requires Zn(2+) as cofactor.

In terms of biological role, binds to the 23S rRNA. In Thermoplasma acidophilum (strain ATCC 25905 / DSM 1728 / JCM 9062 / NBRC 15155 / AMRC-C165), this protein is Large ribosomal subunit protein eL37 (rpl37e).